A 96-amino-acid chain; its full sequence is uncharacterized protein (96 aa).

Helical transmembrane passes span 3-23, 30-50, and 68-88; these read KLTI…QLFA, TLGN…LASI, and IGLL…IIII.

The protein localises to the cell membrane. This is an uncharacterized protein from Bacillus subtilis (strain 168).